The primary structure comprises 337 residues: Mitochondrial uncoupling protein 6 (337 aa).

Solcar repeat units lie at residues 4-136, 145-236, and 246-331; these read KPFL…LKRR, FPLV…VKEI, and GGIG…VRGL. Transmembrane regions (helical) follow at residues 6–26, 105–125, 151–171, 210–230, 252–272, and 304–324; these read FLEG…LDLI, PAAL…YSAT, ITAG…ADVA, RGSW…LATY, VAAS…IDVV, and YKGL…LFLT.

Belongs to the mitochondrial carrier (TC 2.A.29) family.

The protein localises to the mitochondrion inner membrane. Functionally, PUMPS are mitochondrial transporter proteins that create proton leaks across the inner mitochondrial membrane, thus uncoupling oxidative phosphorylation. This leads to a decrease in the efficiency of oxidative phosphorylation and an increase in heat production. May be involved in protecting plant cells against oxidative stress damage. Recombinant PUMP6, reconstituted into liposomes, transports a wide range of dicarboxylic acids including malate, oxaloacetate and succinate as well as phosphate, sulfate and thiosulfate. However, it is unknown if these transports are of any biological significance in vivo. This is Mitochondrial uncoupling protein 6 (PUMP6) from Arabidopsis thaliana (Mouse-ear cress).